Here is a 259-residue protein sequence, read N- to C-terminus: Ubiquinone/menaquinone biosynthesis C-methyltransferase UbiE (259 aa).

S-adenosyl-L-methionine contacts are provided by residues Thr82, Asp103, and 131–132 (NA).

It belongs to the class I-like SAM-binding methyltransferase superfamily. MenG/UbiE family.

It carries out the reaction a 2-demethylmenaquinol + S-adenosyl-L-methionine = a menaquinol + S-adenosyl-L-homocysteine + H(+). The enzyme catalyses a 2-methoxy-6-(all-trans-polyprenyl)benzene-1,4-diol + S-adenosyl-L-methionine = a 5-methoxy-2-methyl-3-(all-trans-polyprenyl)benzene-1,4-diol + S-adenosyl-L-homocysteine + H(+). The protein operates within quinol/quinone metabolism; menaquinone biosynthesis; menaquinol from 1,4-dihydroxy-2-naphthoate: step 2/2. It functions in the pathway cofactor biosynthesis; ubiquinone biosynthesis. In terms of biological role, methyltransferase required for the conversion of demethylmenaquinol (DMKH2) to menaquinol (MKH2) and the conversion of 2-polyprenyl-6-methoxy-1,4-benzoquinol (DDMQH2) to 2-polyprenyl-3-methyl-6-methoxy-1,4-benzoquinol (DMQH2). The protein is Ubiquinone/menaquinone biosynthesis C-methyltransferase UbiE of Agrobacterium fabrum (strain C58 / ATCC 33970) (Agrobacterium tumefaciens (strain C58)).